The chain runs to 231 residues: DNA mismatch repair protein MutH (231 aa).

The protein belongs to the MutH family.

It localises to the cytoplasm. Sequence-specific endonuclease that cleaves unmethylated GATC sequences. It is involved in DNA mismatch repair. This chain is DNA mismatch repair protein MutH, found in Pectobacterium atrosepticum (strain SCRI 1043 / ATCC BAA-672) (Erwinia carotovora subsp. atroseptica).